The primary structure comprises 284 residues: S-formylglutathione hydrolase (284 aa).

A2 carries the N-acetylalanine modification. Residues N63 and K67 each contribute to the substrate site. Residues S152, D229, and H262 each act as charge relay system in the active site.

The protein belongs to the esterase D family. In terms of assembly, homodimer.

The catalysed reaction is S-formylglutathione + H2O = formate + glutathione + H(+). Its activity is regulated as follows. Activity toward p-nitrophenyl acetate inhibited by N-ethylmaleimide, 10-(fluoroethoxyphosphinyl)-N-(biotinamidopentyl)decanamide (FP-biotin), iodoacetamide, CuCl(2) and ZnSO(4), but not by phenylmethylsulfonyl fluoride, EDTA, Mg(2+), Mn(2+), Ca(2+) or paraoxon, an organo-phosphate inhibitor of serine hydrolases. Serine hydrolase which catalyzes the hydrolysis of S-formylglutathione to glutathione and formic acid. Also hydrolyzes S-acetylglutathione and a range of carboxyesters in vitro. Involved in the detoxification of formaldehyde. This is S-formylglutathione hydrolase (SFGH) from Arabidopsis thaliana (Mouse-ear cress).